Reading from the N-terminus, the 137-residue chain is Large-conductance mechanosensitive channel (137 aa).

2 helical membrane-spanning segments follow: residues 16 to 36 (VIDL…VDSI) and 83 to 103 (GNFI…FLMI).

Belongs to the MscL family. In terms of assembly, homopentamer.

Its subcellular location is the cell inner membrane. Functionally, channel that opens in response to stretch forces in the membrane lipid bilayer. May participate in the regulation of osmotic pressure changes within the cell. This chain is Large-conductance mechanosensitive channel, found in Methylibium petroleiphilum (strain ATCC BAA-1232 / LMG 22953 / PM1).